The following is a 285-amino-acid chain: MEDYILKVEELNYNYSDGTHALKGINMNIKRGEVTAILGGNGVGKSTLFQNFNGILKPSSGRILFDNKPIDYSRKGIMKLRESIGIVFQDPDNQLFSASVYQDVSFGAVNMKLPEDEIRKRVDNALKRTGIEHLKDKPTHCLSFGQKKRVAIAGVLVMEPKVLILDEPTAGLDPMGVSEIMKLLVEMQKELGITIIIATHDIDIVPLYCDNVFVMKEGRVILQGNPKEVFAEKEVIRKVNLRLPRIGHLMEILKEKDGFVFDELDLTIGQARKTINSWKNKIFND.

The region spanning 6-242 is the ABC transporter domain; it reads LKVEELNYNY…KEVIRKVNLR (237 aa). 39-46 serves as a coordination point for ATP; it reads GGNGVGKS.

It belongs to the ABC transporter superfamily. Energy-coupling factor EcfA family. In terms of assembly, forms a stable energy-coupling factor (ECF) transporter complex composed of 2 membrane-embedded substrate-binding proteins (S component), 2 ATP-binding proteins (A component) and 2 transmembrane proteins (T component).

Its subcellular location is the cell membrane. ATP-binding (A) component of a common energy-coupling factor (ECF) ABC-transporter complex. Unlike classic ABC transporters this ECF transporter provides the energy necessary to transport a number of different substrates. This is Energy-coupling factor transporter ATP-binding protein EcfA3 from Clostridium perfringens (strain ATCC 13124 / DSM 756 / JCM 1290 / NCIMB 6125 / NCTC 8237 / Type A).